Here is a 140-residue protein sequence, read N- to C-terminus: Peptide methionine sulfoxide reductase MsrB (140 aa).

The MsrB domain occupies 9–131 (DALWREKLTP…NSASIVLDSE (123 aa)). Positions 48, 51, 97, and 100 each coordinate Zn(2+). The active-site Nucleophile is the cysteine 120.

It belongs to the MsrB Met sulfoxide reductase family. It depends on Zn(2+) as a cofactor.

The catalysed reaction is L-methionyl-[protein] + [thioredoxin]-disulfide + H2O = L-methionyl-(R)-S-oxide-[protein] + [thioredoxin]-dithiol. The chain is Peptide methionine sulfoxide reductase MsrB from Cellvibrio japonicus (strain Ueda107) (Pseudomonas fluorescens subsp. cellulosa).